The chain runs to 499 residues: L-arabinose isomerase (499 aa).

Glu306, Glu333, His350, and His449 together coordinate Mn(2+).

It belongs to the arabinose isomerase family. It depends on Mn(2+) as a cofactor.

It catalyses the reaction beta-L-arabinopyranose = L-ribulose. The protein operates within carbohydrate degradation; L-arabinose degradation via L-ribulose; D-xylulose 5-phosphate from L-arabinose (bacterial route): step 1/3. In terms of biological role, catalyzes the conversion of L-arabinose to L-ribulose. In Aeromonas hydrophila subsp. hydrophila (strain ATCC 7966 / DSM 30187 / BCRC 13018 / CCUG 14551 / JCM 1027 / KCTC 2358 / NCIMB 9240 / NCTC 8049), this protein is L-arabinose isomerase.